The following is an 834-amino-acid chain: U-box domain-containing protein 33 (834 aa).

The interval 232-308 (FSTPESEHQH…SPSSFPDGVD (77 aa)) is disordered. Composition is skewed to polar residues over residues 243-273 (SRVQ…GSLN) and 284-293 (SEVTGSATVM). The stretch at 334 to 462 (LRRQKAEKNA…SHAETSTLQL (129 aa)) forms a coiled coil. Residues 481–744 (FDSTLKIGEG…EVWRVLEPMR (264 aa)) form the Protein kinase domain. ATP contacts are provided by residues 487–495 (IGEGGYGSI) and Lys508. Asp603 functions as the Proton acceptor in the catalytic mechanism. The region spanning 762–834 (IAPPYFICPI…AIQEWLQHHL (73 aa)) is the U-box domain.

This sequence belongs to the protein kinase superfamily. Ser/Thr protein kinase family.

It carries out the reaction L-seryl-[protein] + ATP = O-phospho-L-seryl-[protein] + ADP + H(+). The enzyme catalyses L-threonyl-[protein] + ATP = O-phospho-L-threonyl-[protein] + ADP + H(+). It catalyses the reaction S-ubiquitinyl-[E2 ubiquitin-conjugating enzyme]-L-cysteine + [acceptor protein]-L-lysine = [E2 ubiquitin-conjugating enzyme]-L-cysteine + N(6)-ubiquitinyl-[acceptor protein]-L-lysine.. It functions in the pathway protein modification; protein ubiquitination. Its function is as follows. Functions as an E3 ubiquitin ligase. The sequence is that of U-box domain-containing protein 33 (PUB33) from Arabidopsis thaliana (Mouse-ear cress).